The sequence spans 65 residues: Large ribosomal subunit protein bL35 (65 aa).

A disordered region spans residues 1 to 30 (MPKMKTNRGAAKRFRKTASGRFKSKQSHLR). The span at 10–30 (AAKRFRKTASGRFKSKQSHLR) shows a compositional bias: basic residues.

This sequence belongs to the bacterial ribosomal protein bL35 family.

This chain is Large ribosomal subunit protein bL35, found in Pseudoalteromonas atlantica (strain T6c / ATCC BAA-1087).